Reading from the N-terminus, the 194-residue chain is Peptidyl-tRNA hydrolase (194 aa).

Position 17 (tyrosine 17) interacts with tRNA. Histidine 22 serves as the catalytic Proton acceptor. TRNA is bound by residues phenylalanine 68, asparagine 70, and asparagine 116.

The protein belongs to the PTH family. Monomer.

Its subcellular location is the cytoplasm. The catalysed reaction is an N-acyl-L-alpha-aminoacyl-tRNA + H2O = an N-acyl-L-amino acid + a tRNA + H(+). In terms of biological role, hydrolyzes ribosome-free peptidyl-tRNAs (with 1 or more amino acids incorporated), which drop off the ribosome during protein synthesis, or as a result of ribosome stalling. Functionally, catalyzes the release of premature peptidyl moieties from peptidyl-tRNA molecules trapped in stalled 50S ribosomal subunits, and thus maintains levels of free tRNAs and 50S ribosomes. The sequence is that of Peptidyl-tRNA hydrolase from Mannheimia succiniciproducens (strain KCTC 0769BP / MBEL55E).